The primary structure comprises 344 residues: Biotin synthase (344 aa).

In terms of domain architecture, Radical SAM core spans 65–290 (PEVEVEGIIS…RTMLRFAGGR (226 aa)). Residues Cys-80, Cys-84, and Cys-87 each contribute to the [4Fe-4S] cluster site. Residues Cys-123, Cys-156, Cys-215, and Arg-285 each contribute to the [2Fe-2S] cluster site.

The protein belongs to the radical SAM superfamily. Biotin synthase family. In terms of assembly, homodimer. [4Fe-4S] cluster is required as a cofactor. [2Fe-2S] cluster serves as cofactor.

The enzyme catalyses (4R,5S)-dethiobiotin + (sulfur carrier)-SH + 2 reduced [2Fe-2S]-[ferredoxin] + 2 S-adenosyl-L-methionine = (sulfur carrier)-H + biotin + 2 5'-deoxyadenosine + 2 L-methionine + 2 oxidized [2Fe-2S]-[ferredoxin]. It participates in cofactor biosynthesis; biotin biosynthesis; biotin from 7,8-diaminononanoate: step 2/2. In terms of biological role, catalyzes the conversion of dethiobiotin (DTB) to biotin by the insertion of a sulfur atom into dethiobiotin via a radical-based mechanism. This chain is Biotin synthase, found in Mycolicibacterium paratuberculosis (strain ATCC BAA-968 / K-10) (Mycobacterium paratuberculosis).